The sequence spans 410 residues: uncharacterized protein (410 aa).

The signal sequence occupies residues 1-41; the sequence is MVKSFRMKALIAGAAVAAAVSAGAVSDVPAAKVLQPTAAYA.

In terms of assembly, interacts with PcrA, Pdp, YclM, YkvL, YhcQ and YomL. The interaction with PcrA is not essential for cell viability or repair of UV-induced lesions.

It localises to the secreted. Functionally, increases the processivity of the PcrA helicase, but does not bind to DNA. This is an uncharacterized protein from Bacillus subtilis (strain 168).